Consider the following 321-residue polypeptide: 6-phosphogluconolactonase-like protein 1 (321 aa).

Positions 36–85 (GKVSRSTQMSGTSLNGNGNTESKTMERVNSVRSNASSRGGSEDGATKKLK) are disordered. Residues 39-57 (SRSTQMSGTSLNGNGNTES) show a composition bias toward polar residues. Over residues 63-74 (VNSVRSNASSRG) the composition is skewed to low complexity. A phosphoserine mark is found at serine 65 and serine 68. Residues 75–85 (GSEDGATKKLK) are compositionally biased toward basic and acidic residues. At threonine 320 the chain carries Phosphothreonine.

Belongs to the glucosamine/galactosamine-6-phosphate isomerase family. 6-phosphogluconolactonase subfamily.

It localises to the cytoplasm. Its subcellular location is the nucleus. In terms of biological role, may be involved in regulation of tRNA subcellular distribution. The chain is 6-phosphogluconolactonase-like protein 1 (SOL1) from Saccharomyces cerevisiae (strain ATCC 204508 / S288c) (Baker's yeast).